A 341-amino-acid chain; its full sequence is N-(sulfonatooxy)alkenimidothioic acid sulfate-lyase (epithionitrile-forming) (341 aa).

The interval 1 to 24 (MAPTLQGQWIKVGQKGGTGPGPRS) is disordered. Kelch repeat units follow at residues 34 to 82 (KLYS…VRMV), 87 to 133 (KIYI…FHSM), 139 to 194 (HVYV…VVQG), and 203 to 249 (ATSI…AHAV). 8 residues coordinate a (Z)-N-(sulfonatooxy)alkanimidothioate: Lys-46, Arg-94, Thr-129, Phe-130, Arg-157, Gly-186, Lys-211, and Val-244. Arg-94 acts as the Proton donor in catalysis. The active-site Proton donor is Arg-157. Residues Glu-260, Asp-264, and His-268 each coordinate Fe(2+). Trp-303 lines the a (Z)-N-(sulfonatooxy)alkanimidothioate pocket.

In terms of assembly, homodimer. Interacts with WRKY53. It depends on Fe(2+) as a cofactor. In terms of tissue distribution, expressed in epidermal cells of all above-ground organs except the anthers, in cambial cells of leaf and stem vascular bundles, and in glucosinolates rich S-cells found in stems just below the inflorescence. Absent from roots.

The protein localises to the cytoplasm. It is found in the nucleus. The enzyme catalyses a (Z)-N-(sulfonatooxy)alkenimidothioate = an epithionitrile + sulfate. It catalyses the reaction a (Z)-N-(sulfonatooxy)alkanimidothioate = a nitrile + sulfur + sulfate. The catalysed reaction is (Z)-(indol-3-yl)-N-(sulfonatooxy)methanimidothioate = (indol-3-yl)acetonitrile + sulfur + sulfate. Its activity is regulated as follows. Not dependent on the presence of Fe(2+) although supplemental Fe(2+) increases nitriles formation. Functionally, specifier protein that contributes to constitutive and herbivore-induced simple nitrile formation. Converts glucosinolates both to epithionitriles and to simple nitriles in the presence of myrosinase. Promotes the formation of epithionitriles after hydrolysis of alkenylglucosinolates containing a terminal double bond. Mediates indol-3-ylacetonitrile (IACN) production from indol-3-ylmethylglucosinolate (glucobrassicin). Triggers the production of 3,4-epithiobutylnitrile from 2-propenylisothiocyanate, product of 2-propenylglucosinolate (sinigrin) catalysis by myrosinase. Seems inactive toward benzylglucosinolate (glucotropaeolin). Acts as a negative regulator of senescence. The protein is N-(sulfonatooxy)alkenimidothioic acid sulfate-lyase (epithionitrile-forming) of Arabidopsis thaliana (Mouse-ear cress).